The following is a 248-amino-acid chain: Ribosomal RNA small subunit methyltransferase G (248 aa).

Residues glycine 85, phenylalanine 90, 108 to 110 (DSS), 137 to 138 (AE), and arginine 156 each bind S-adenosyl-L-methionine.

This sequence belongs to the methyltransferase superfamily. RNA methyltransferase RsmG family.

The protein resides in the cytoplasm. Its function is as follows. Specifically methylates the N7 position of a guanine in 16S rRNA. The polypeptide is Ribosomal RNA small subunit methyltransferase G (Prochlorococcus marinus (strain NATL2A)).